The chain runs to 199 residues: Protein ZNRD2 (199 aa).

Position 2 is an N-acetylalanine (Ala2). Cys53, Cys56, Cys70, and Cys73 together coordinate Zn(2+). A Phosphoserine modification is found at Ser94. Positions 100 to 125 are disordered; it reads QLASASELPLGSRPAPQPPVPRPEHC. The Nuclear export signal signature appears at 173-194; it reads SLETSIQLCGLIRACAEALRSL.

In terms of assembly, homodimer. Zn(2+) serves as cofactor.

The protein resides in the cytoplasm. Might play a role in mitosis. Antigenic molecule. Could be a centromere-associated protein. May induce anti-centromere antibodies. The chain is Protein ZNRD2 from Homo sapiens (Human).